A 379-amino-acid chain; its full sequence is Cobalt-precorrin-5B C(1)-methyltransferase (379 aa).

It belongs to the CbiD family.

The enzyme catalyses Co-precorrin-5B + S-adenosyl-L-methionine = Co-precorrin-6A + S-adenosyl-L-homocysteine. It participates in cofactor biosynthesis; adenosylcobalamin biosynthesis; cob(II)yrinate a,c-diamide from sirohydrochlorin (anaerobic route): step 6/10. Its function is as follows. Catalyzes the methylation of C-1 in cobalt-precorrin-5B to form cobalt-precorrin-6A. This Salmonella dublin (strain CT_02021853) protein is Cobalt-precorrin-5B C(1)-methyltransferase.